The following is a 396-amino-acid chain: Putative nickel insertion protein (396 aa).

It belongs to the LarC family.

This chain is Putative nickel insertion protein, found in Methanosarcina acetivorans (strain ATCC 35395 / DSM 2834 / JCM 12185 / C2A).